The sequence spans 621 residues: 1-deoxy-D-xylulose-5-phosphate synthase (621 aa).

Thiamine diphosphate contacts are provided by residues H80 and 121–123; that span reads GHS. Residue D152 participates in Mg(2+) binding. Thiamine diphosphate is bound by residues 153–154, N181, Y288, and E370; that span reads GA. Position 181 (N181) interacts with Mg(2+).

Belongs to the transketolase family. DXPS subfamily. Homodimer. It depends on Mg(2+) as a cofactor. Thiamine diphosphate is required as a cofactor.

It catalyses the reaction D-glyceraldehyde 3-phosphate + pyruvate + H(+) = 1-deoxy-D-xylulose 5-phosphate + CO2. It participates in metabolic intermediate biosynthesis; 1-deoxy-D-xylulose 5-phosphate biosynthesis; 1-deoxy-D-xylulose 5-phosphate from D-glyceraldehyde 3-phosphate and pyruvate: step 1/1. In terms of biological role, catalyzes the acyloin condensation reaction between C atoms 2 and 3 of pyruvate and glyceraldehyde 3-phosphate to yield 1-deoxy-D-xylulose-5-phosphate (DXP). This chain is 1-deoxy-D-xylulose-5-phosphate synthase, found in Edwardsiella ictaluri (strain 93-146).